We begin with the raw amino-acid sequence, 357 residues long: UDP-N-acetylglucosamine--N-acetylmuramyl-(pentapeptide) pyrophosphoryl-undecaprenol N-acetylglucosamine transferase (357 aa).

UDP-N-acetyl-alpha-D-glucosamine is bound by residues 13-15 (SAG), arginine 166, serine 196, and glutamine 291.

This sequence belongs to the glycosyltransferase 28 family. MurG subfamily.

Its subcellular location is the cell membrane. It carries out the reaction di-trans,octa-cis-undecaprenyl diphospho-N-acetyl-alpha-D-muramoyl-L-alanyl-D-glutamyl-meso-2,6-diaminopimeloyl-D-alanyl-D-alanine + UDP-N-acetyl-alpha-D-glucosamine = di-trans,octa-cis-undecaprenyl diphospho-[N-acetyl-alpha-D-glucosaminyl-(1-&gt;4)]-N-acetyl-alpha-D-muramoyl-L-alanyl-D-glutamyl-meso-2,6-diaminopimeloyl-D-alanyl-D-alanine + UDP + H(+). It functions in the pathway cell wall biogenesis; peptidoglycan biosynthesis. Functionally, cell wall formation. Catalyzes the transfer of a GlcNAc subunit on undecaprenyl-pyrophosphoryl-MurNAc-pentapeptide (lipid intermediate I) to form undecaprenyl-pyrophosphoryl-MurNAc-(pentapeptide)GlcNAc (lipid intermediate II). The polypeptide is UDP-N-acetylglucosamine--N-acetylmuramyl-(pentapeptide) pyrophosphoryl-undecaprenol N-acetylglucosamine transferase (Clostridium perfringens (strain SM101 / Type A)).